The following is a 191-amino-acid chain: uncharacterized protein (191 aa).

The HTH tetR-type domain occupies glycine 5–isoleucine 65. The segment at residues glycine 28 to phenylalanine 47 is a DNA-binding region (H-T-H motif).

This is an uncharacterized protein from Bacillus subtilis (strain 168).